Here is a 201-residue protein sequence, read N- to C-terminus: Dephospho-CoA kinase (201 aa).

Residues 2 to 201 form the DPCK domain; that stretch reads MIGLTGGIAS…KRWKVIPEDQ (200 aa). 10 to 15 lines the ATP pocket; that stretch reads ASGKSS.

Belongs to the CoaE family.

It localises to the cytoplasm. It carries out the reaction 3'-dephospho-CoA + ATP = ADP + CoA + H(+). Its pathway is cofactor biosynthesis; coenzyme A biosynthesis; CoA from (R)-pantothenate: step 5/5. Its function is as follows. Catalyzes the phosphorylation of the 3'-hydroxyl group of dephosphocoenzyme A to form coenzyme A. This is Dephospho-CoA kinase from Halalkalibacterium halodurans (strain ATCC BAA-125 / DSM 18197 / FERM 7344 / JCM 9153 / C-125) (Bacillus halodurans).